The sequence spans 603 residues: MRRSEVLADESITCLQKALTHLREIWELIGIPEEQRLQRTEVVKKHIKDLLDRMIAEEESLRERLLKSISICQKELSTLCSELQVKPFQEEKDTTILQLEKDLRTQVELMRKQKKERKQELKLLQEQEQELRDILCMPPCDVDSTSVPTLEELKLFRQRVATLRETKESRREEFVNIKKQIILCMEELEHSPDTSFERDVVCEDESAFCLSLENIATLQKLLKQLEMKKSQNEAECEGLRTQIRELWDRLQIPEEEREPVEAIMTGSKTKIRNALKLEVDRLEELKMQNIKQVIEKIRVELAQFWDQCFYSQEQRQAFAPYYSEDYTENLLHLHDAEIVRLRNYYDVHKELFQGVQKWEESWKLFLEFERKASDPGRFTNRGGNLLKEEKERAKLQKTLPKLEEELKARIEQWEQEHSTAFVVNGQKFMEYVTEQWELHRLEKERAKQERQLKNKKQTEAEMLYGSTPRTPSKRPGQTPKKSGKMNTTTMSSATPNSSIRPVFGGSVYRSPMSRLPPSGSKSVVTSLCSGKKTPRAAQLRANKENLDLNGSILSGGYPGSTPLQHNCSIKSVASTYSEFSRELSKASRSDATSRILNSTNIQS.

A dimerization region spans residues 1 to 341 (MRRSEVLADE…HLHDAEIVRL (341 aa)). 5 coiled-coil regions span residues 34–65 (EQRL…RERL), 96–136 (ILQL…DILC), 211–246 (SLEN…IREL), 272–304 (RNAL…LAQF), and 383–463 (GNLL…AEML). The spectrin-fold stretch occupies residues 342 to 466 (RNYYDVHKEL…QTEAEMLYGS (125 aa)). Basic and acidic residues predominate over residues 447–459 (KQERQLKNKKQTE). Residues 447–502 (KQERQLKNKKQTEAEMLYGSTPRTPSKRPGQTPKKSGKMNTTTMSSATPNSSIRPV) are disordered. The unstructured, Arg/Lys rich stretch occupies residues 467-603 (TPRTPSKRPG…RILNSTNIQS (137 aa)). At Thr-470 the chain carries Phosphothreonine; by CDK1. Polar residues predominate over residues 484-499 (KMNTTTMSSATPNSSI). Residues Ser-510 and Ser-568 each carry the phosphoserine modification. Thr-575 bears the Phosphothreonine mark. The interval 583–603 (LSKASRSDATSRILNSTNIQS) is disordered. Over residues 589–603 (SDATSRILNSTNIQS) the composition is skewed to polar residues. Position 599 is a phosphothreonine; by PLK1 (Thr-599).

It belongs to the MAP65/ASE1 family. In terms of assembly, homodimer. Interacts with the C-terminal Rho-GAP domain and the basic region of RACGAP1. The interaction with RACGAP1 inhibits its GAP activity towards CDC42 in vitro, which may be required for maintaining normal spindle morphology. Interacts (via N-terminus) with the C-terminus of CENPE (via C-terminus); the interaction occurs during late mitosis. Interacts (via N-terminus) with KIF4A (via C-terminus); the interaction is required for the progression of mitosis. Interacts (via N-terminus) with KIF23 (via C-terminus); the interaction occurs during late mitosis. Interacts with KIF14 and KIF20A. Interacts with PLK1. Interacts with KIF20B. Interacts with CCDC66. Phosphorylation by CDK1 in early mitosis holds PRC1 in an inactive monomeric state, during the metaphase to anaphase transition, PRC1 is dephosphorylated, promoting interaction with KIF4A, which then translocates PRC1 along mitotic spindles to the plus ends of antiparallel interdigitating microtubules. Dephosphorylation also promotes MT-bundling activity by allowing dimerization. Phosphorylation by CDK1 prevents PLK1-binding: upon degradation of CDK1 at anaphase and dephosphorylation, it is then phosphorylated by PLK1, leading to cytokinesis.

The protein resides in the nucleus. Its subcellular location is the cytoplasm. The protein localises to the cytoskeleton. It is found in the spindle pole. It localises to the midbody. Its function is as follows. Key regulator of cytokinesis that cross-links antiparrallel microtubules at an average distance of 35 nM. Essential for controlling the spatiotemporal formation of the midzone and successful cytokinesis. Required for KIF14 localization to the central spindle and midbody. Required to recruit PLK1 to the spindle. Stimulates PLK1 phosphorylation of RACGAP1 to allow recruitment of ECT2 to the central spindle. Acts as an oncogene for promoting bladder cancer cells proliferation, apoptosis inhibition and carcinogenic progression. The polypeptide is Protein regulator of cytokinesis 1 (Mus musculus (Mouse)).